Consider the following 168-residue polypeptide: Probable chemoreceptor glutamine deamidase CheD (168 aa).

Belongs to the CheD family.

It carries out the reaction L-glutaminyl-[protein] + H2O = L-glutamyl-[protein] + NH4(+). Functionally, probably deamidates glutamine residues to glutamate on methyl-accepting chemotaxis receptors (MCPs), playing an important role in chemotaxis. This is Probable chemoreceptor glutamine deamidase CheD from Pseudomonas syringae pv. tomato (strain ATCC BAA-871 / DC3000).